Here is a 64-residue protein sequence, read N- to C-terminus: UPF0434 protein MADE_1009415 (64 aa).

This sequence belongs to the UPF0434 family.

This Alteromonas mediterranea (strain DSM 17117 / CIP 110805 / LMG 28347 / Deep ecotype) protein is UPF0434 protein MADE_1009415.